Reading from the N-terminus, the 466-residue chain is Ribulose bisphosphate carboxylase large chain (466 aa).

Position 4 is an N6,N6,N6-trimethyllysine (lysine 4). Residues asparagine 113 and threonine 163 each coordinate substrate. Lysine 165 functions as the Proton acceptor in the catalytic mechanism. Lysine 167 provides a ligand contact to substrate. Mg(2+) contacts are provided by lysine 191, aspartate 193, and glutamate 194. Lysine 191 is subject to N6-carboxylysine. Histidine 284 (proton acceptor) is an active-site residue. 3 residues coordinate substrate: arginine 285, histidine 317, and serine 369.

It belongs to the RuBisCO large chain family. Type I subfamily. Heterohexadecamer of 8 large chains and 8 small chains; disulfide-linked. The disulfide link is formed within the large subunit homodimers. It depends on Mg(2+) as a cofactor. In terms of processing, the disulfide bond which can form in the large chain dimeric partners within the hexadecamer appears to be associated with oxidative stress and protein turnover.

It localises to the plastid. It is found in the chloroplast. It carries out the reaction 2 (2R)-3-phosphoglycerate + 2 H(+) = D-ribulose 1,5-bisphosphate + CO2 + H2O. It catalyses the reaction D-ribulose 1,5-bisphosphate + O2 = 2-phosphoglycolate + (2R)-3-phosphoglycerate + 2 H(+). RuBisCO catalyzes two reactions: the carboxylation of D-ribulose 1,5-bisphosphate, the primary event in carbon dioxide fixation, as well as the oxidative fragmentation of the pentose substrate in the photorespiration process. Both reactions occur simultaneously and in competition at the same active site. This Barleria prionitis (Porcupine flower) protein is Ribulose bisphosphate carboxylase large chain.